Here is a 487-residue protein sequence, read N- to C-terminus: Zinc finger and BTB domain-containing protein 32 (487 aa).

Residues 29 to 87 (CDTLITVGGQEFPAHSLVLAGVSQQLGRRGQWALGEGISPSTFAQLLNFVYGESVELQP) form the BTB domain. Positions 113 to 166 (RGDRAKKPDPGLKKHQEEPEKPSRNAERELGDPGEKQKPEQVSRTGGREQEMLH) are enriched in basic and acidic residues. Disordered stretches follow at residues 113–208 (RGDR…ADGK) and 308–371 (QNQL…ARSR). Over residues 308 to 320 (QNQLASSSPTPGS) the composition is skewed to polar residues. The span at 357–369 (PPRPHPPPAPPAR) shows a compositional bias: pro residues. 3 C2H2-type zinc fingers span residues 373 to 395 (YACS…YRVH), 401 to 423 (FSCS…LRTH), and 428 to 450 (YRXX…MRGH). Positions 468–487 (SSSRPSRPSTSPCCPSSSTT) are disordered.

It belongs to the krueppel C2H2-type zinc-finger protein family. Homodimer (via PTB domain). Interacts with the N-terminal of FANCC. Interacts with ZBTB16. Interacts with GATA3.

Its subcellular location is the nucleus. Functionally, DNA-binding protein that binds to the to a 5'-TGTACAGTGT-3' core sequence. May function as a transcriptional transactivator and transcriptional repressor. Probably exerts its repressor effect by preventing GATA3 from binding to DNA. May play a role in regulating the differentiation and activation of helper T-cells. The sequence is that of Zinc finger and BTB domain-containing protein 32 (ZBTB32) from Pan troglodytes (Chimpanzee).